Reading from the N-terminus, the 137-residue chain is Ribosome-binding factor A (137 aa).

Residues 110-137 form a disordered region; that stretch reads RIQQEKEGATDDRDQNDSGEDATPHSND. The span at 112–125 shows a compositional bias: basic and acidic residues; sequence QQEKEGATDDRDQN.

It belongs to the RbfA family. Monomer. Binds 30S ribosomal subunits, but not 50S ribosomal subunits or 70S ribosomes.

It localises to the cytoplasm. In terms of biological role, one of several proteins that assist in the late maturation steps of the functional core of the 30S ribosomal subunit. Associates with free 30S ribosomal subunits (but not with 30S subunits that are part of 70S ribosomes or polysomes). Required for efficient processing of 16S rRNA. May interact with the 5'-terminal helix region of 16S rRNA. This is Ribosome-binding factor A from Rhodopirellula baltica (strain DSM 10527 / NCIMB 13988 / SH1).